A 313-amino-acid polypeptide reads, in one-letter code: tRNA dimethylallyltransferase (313 aa).

11–18 contributes to the ATP binding site; sequence GPTACGKT. 13 to 18 is a binding site for substrate; that stretch reads TACGKT. Interaction with substrate tRNA stretches follow at residues 36–39, 160–164, and 243–248; these read DSAL, QRIGR, and RCVGYR.

Belongs to the IPP transferase family. As to quaternary structure, monomer. The cofactor is Mg(2+).

The enzyme catalyses adenosine(37) in tRNA + dimethylallyl diphosphate = N(6)-dimethylallyladenosine(37) in tRNA + diphosphate. Its function is as follows. Catalyzes the transfer of a dimethylallyl group onto the adenine at position 37 in tRNAs that read codons beginning with uridine, leading to the formation of N6-(dimethylallyl)adenosine (i(6)A). The protein is tRNA dimethylallyltransferase of Neisseria gonorrhoeae (strain NCCP11945).